A 413-amino-acid chain; its full sequence is Serine/threonine-protein kinase ppk27 (413 aa).

The 302-residue stretch at tryptophan 102–phenylalanine 403 folds into the Protein kinase domain. ATP contacts are provided by residues isoleucine 108 to valine 116 and lysine 133. Residue aspartate 231 is the Proton acceptor of the active site.

The protein belongs to the protein kinase superfamily. Ser/Thr protein kinase family.

Its subcellular location is the cytoplasm. It catalyses the reaction L-seryl-[protein] + ATP = O-phospho-L-seryl-[protein] + ADP + H(+). The enzyme catalyses L-threonyl-[protein] + ATP = O-phospho-L-threonyl-[protein] + ADP + H(+). The protein is Serine/threonine-protein kinase ppk27 (ppk27) of Schizosaccharomyces pombe (strain 972 / ATCC 24843) (Fission yeast).